Consider the following 82-residue polypeptide: Kunitz-type serine protease inhibitor PILP-1 (82 aa).

Residues 1-24 form the signal peptide; the sequence is MSSGSLLLLLGLLTLWAELTPIST. The BPTI/Kunitz inhibitor domain maps to 30–80; the sequence is CDKAPDTERCKRNVYAFYYNPSARDCLQFVYGGCDGNGKHFRSKALCLFHC. 3 cysteine pairs are disulfide-bonded: Cys30-Cys80, Cys39-Cys63, and Cys55-Cys76.

This sequence belongs to the venom Kunitz-type family. Expressed by the venom gland.

It is found in the secreted. Its function is as follows. Serine protease inhibitor that inhibits trypsin (Ki=55.62 nM). In Bungarus multicinctus (Many-banded krait), this protein is Kunitz-type serine protease inhibitor PILP-1.